The primary structure comprises 276 residues: MLIDFRQVCGAGAAALALASPALADTTNLRVCASTKDAPFSDAQGAGFENKIAQVLADEMGATLDLVMLEKDAIYLVRDGIEKDLCDVLVGVDAGDERLLTTRPYYRSGYAFVTRQDRNFEGDKWQDVDQEGFDTFSYRLHSPAETILKYTGRYEYNLIYQASLTNFEDRRNKYTQVEASRVITEVADGGADLAIVFAPEAARYVRDSREPLRMTLITNEIERSDGVIIPLQYSQSVGVSKTHPELLGPIEQALQSGKARIDAILTEEGIPLLPSS.

The signal sequence occupies residues 1–24 (MLIDFRQVCGAGAAALALASPALA).

It is found in the periplasm. Functionally, may be involved in the assemblage of active methanol dehydrogenase and/or its cofactor PQQ in the periplasm. The polypeptide is Protein MoxJ (moxJ) (Paracoccus denitrificans).